The primary structure comprises 201 residues: FMN-dependent NADH:quinone oxidoreductase (201 aa).

FMN is bound by residues Ser-10, Ser-16–Ser-18, Met-96–Phe-99, and Ser-140–Gly-143.

The protein belongs to the azoreductase type 1 family. As to quaternary structure, homodimer. Requires FMN as cofactor.

It carries out the reaction 2 a quinone + NADH + H(+) = 2 a 1,4-benzosemiquinone + NAD(+). The enzyme catalyses N,N-dimethyl-1,4-phenylenediamine + anthranilate + 2 NAD(+) = 2-(4-dimethylaminophenyl)diazenylbenzoate + 2 NADH + 2 H(+). Its function is as follows. Quinone reductase that provides resistance to thiol-specific stress caused by electrophilic quinones. Functionally, also exhibits azoreductase activity. Catalyzes the reductive cleavage of the azo bond in aromatic azo compounds to the corresponding amines. The sequence is that of FMN-dependent NADH:quinone oxidoreductase from Salmonella paratyphi A (strain ATCC 9150 / SARB42).